A 633-amino-acid polypeptide reads, in one-letter code: Chaperone protein DnaK (633 aa).

Position 198 is a phosphothreonine; by autocatalysis (Thr-198). The interval 599–633 (QQASQETPGDGDAGAAGAKKKDDDDVVDADYEEVK) is disordered. A compositionally biased stretch (acidic residues) spans 622-633 (DDVVDADYEEVK).

Belongs to the heat shock protein 70 family.

Its function is as follows. Acts as a chaperone. The sequence is that of Chaperone protein DnaK from Desulfotalea psychrophila (strain LSv54 / DSM 12343).